Consider the following 892-residue polypeptide: Zinc finger protein 512B (892 aa).

Residues 1-82 are disordered; that stretch reads MTDPFCVGGR…KKGRPKAENQ (82 aa). Residues 8 to 19 are compositionally biased toward low complexity; that stretch reads GGRRLPGSSKSG. A C2H2-type 1; atypical zinc finger spans residues 105–129; that stretch reads VKCPNSGCWLEFPSIYGLKYHYQRC. Residues 140-163 form a C2H2-type 2 zinc finger; it reads FPCPFCEAAFTSKTQLEKHRIWNH. 2 disordered regions span residues 323–473 and 562–582; these read MVLL…RKKV and EHSA…EERE. A compositionally biased stretch (polar residues) spans 371–384; sequence SMGQSSAFQLSADT. The span at 385–398 shows a compositional bias: low complexity; it reads SSGSLSPGSRPSGG. The residue at position 409 (S409) is a Phosphoserine. Basic residues predominate over residues 418–428; that stretch reads TKHRRKQKTPK. The NuRD interaction motif motif lies at 421 to 427; the sequence is RRKQKTP. A C2H2-type 3 zinc finger spans residues 540–563; sequence LKCQHCRKQFKSKAGLNYHTMAEH. Residues 594–618 form a C2H2-type 4; atypical zinc finger; it reads LRCPQEGCGAAFSSLMGYQYHQRRC. A C2H2-type 5 zinc finger spans residues 630–653; it reads FPCTHCGKTYRSKAGHDYHVRSEH. The disordered stretch occupies residues 649–682; that stretch reads VRSEHTAPPPEEPTDKSPEAEDPLGVERTPSGRV. S686 carries the post-translational modification Phosphoserine. The segment at 750-774 adopts a C2H2-type 6; atypical zinc-finger fold; that stretch reads VNCPNDCCEAIYSSVSGLKAHLASC. The C2H2-type 7 zinc-finger motif lies at 784–807; sequence YRCLLCPKEFSSESGVKYHILKTH. The interval 812–892 is disordered; that stretch reads FRTSADPPPK…KVGVSKAPEK (81 aa). Basic and acidic residues predominate over residues 819–831; it reads PPKHRSQDSLVPK. Basic residues predominate over residues 832–849; that stretch reads KEKKKNLAGGKKRGRKPK. Over residues 850 to 876 the composition is skewed to basic and acidic residues; the sequence is ERTPEEPVAKLPPRRDDWPPGCRDKGA.

It belongs to the krueppel C2H2-type zinc-finger protein family. As to quaternary structure, interacts (via its NuRD interaction motif) with RBBP4 of the nucleosome remodeling and deacetylase (NuRD) complex; the interaction is direct and may play a role in repressing gene expression.

It localises to the nucleus. Functionally, involved in transcriptional regulation by repressing gene expression. Associates with the nucleosome remodeling and histone deacetylase (NuRD) complex, which promotes transcriptional repression by histone deacetylation and nucleosome remodeling. This chain is Zinc finger protein 512B (ZNF512B), found in Homo sapiens (Human).